The primary structure comprises 548 residues: MAGLRARRGPGRRLLVLSTLGFCLMLQVSAKRPPKTPPCPPSCSCTRDTAFCVDSKSVPKNLPSEVISLTLVNAAFSEIQDGAFSHLPLLQFLLLNSNKFTLIGDNAFIGLSHLQYLFIENNDIWALSKFTFRGLKSLTHLSLANNNLQTLPRDIFRPLDILSDLDLRGNALNCDCKVKWLVEWLAHTNTTVAPIYCASPPRFQEHKVQDLPLREFDCITTDFVLYQTLSFPAVSAEPFLYSSDLYLALAQPGASACTILKWDYVERQLRDYDRIPAPSAVHCKPMVVDGQLYVVVAQLFGGSYIYHWDPNTTRFTKLQDIDPQRVRKPNDLEAFRIDGDWFFAVADSSKAGATSLYRWHQNGFYSHQALHAWHRDTDLEFVDGEGKPRLIVSSSSQAPVIYQWSRSQKQFVAQGEVTQVPDAQAVKHFRAGRDSYLCLSRYIGDSKILRWEGTRFSEVQALPSRGSLALQPFLVGGHRYLALGSDFSFTQIYQWDEGRQKFVRFQELAVQAPRAFCYMPAGDAQLLLAPSFKGQTLVYRHVVVDLSA.

Residues M1–A30 form the signal peptide. The 34-residue stretch at K31–S64 folds into the LRRNT domain. 3 LRR repeats span residues L89–G110, H113–G134, and S137–P158. The LRRCT domain occupies N170 to T220. N-linked (GlcNAc...) asparagine glycosylation occurs at N189. 2 EAR repeats span residues D222 to Y264 and Q268 to P310. The N-linked (GlcNAc...) asparagine glycan is linked to N311. 5 EAR repeats span residues R314–Q361, G363–R406, Q410–G453, R455–E497, and K501–V543.

Interacts with STX1A. Brain.

It localises to the secreted. The protein resides in the cytoplasmic vesicle. It is found in the secretory vesicle. The protein localises to the synaptic vesicle. Its subcellular location is the synapse. It localises to the synaptosome. The protein resides in the cell projection. It is found in the axon. Functionally, may participate in the regulation of neuronal exocytosis. The chain is Leucine-rich repeat LGI family member 3 (Lgi3) from Mus musculus (Mouse).